The sequence spans 1594 residues: Protein SHORTAGE IN CHIASMATA 1 (1594 aa).

5 disordered regions span residues 1148–1180, 1239–1283, 1396–1426, 1491–1523, and 1536–1594; these read DSRS…SKKK, APFK…QPDF, AADI…YADN, RSRA…NTKR, and GGNK…LVWK. Residues 1151–1165 are compositionally biased toward low complexity; it reads SVMTDSSSSVSSGPD. 2 stretches are compositionally biased toward basic and acidic residues: residues 1254 to 1265 and 1402 to 1414; these read PSKDPERFDKKS and SSER…DSKY. Polar residues predominate over residues 1577-1594; that stretch reads QSLSYTANGTGQTKLVWK.

It belongs to the XPF family. In terms of assembly, interacts with PTD. In terms of tissue distribution, highest levels in young buds, where male meiosis occurs. Also present at low levels in plantlets, leaves, flowers, and roots.

Its subcellular location is the nucleus. Essential for the formation of class I meiotic crossovers. In Arabidopsis thaliana (Mouse-ear cress), this protein is Protein SHORTAGE IN CHIASMATA 1.